The chain runs to 275 residues: NH(3)-dependent NAD(+) synthetase (275 aa).

Residue 50-57 (GISGGVDS) coordinates ATP. Residue D56 coordinates Mg(2+). R147 provides a ligand contact to deamido-NAD(+). ATP is bound at residue T167. Mg(2+) is bound at residue E172. Deamido-NAD(+) contacts are provided by K180 and D187. ATP is bound by residues K196 and T218. A deamido-NAD(+)-binding site is contributed by 267–268 (HK).

This sequence belongs to the NAD synthetase family. In terms of assembly, homodimer.

The enzyme catalyses deamido-NAD(+) + NH4(+) + ATP = AMP + diphosphate + NAD(+) + H(+). The protein operates within cofactor biosynthesis; NAD(+) biosynthesis; NAD(+) from deamido-NAD(+) (ammonia route): step 1/1. Functionally, catalyzes the ATP-dependent amidation of deamido-NAD to form NAD. Uses ammonia as a nitrogen source. The chain is NH(3)-dependent NAD(+) synthetase from Pseudomonas putida (strain ATCC 700007 / DSM 6899 / JCM 31910 / BCRC 17059 / LMG 24140 / F1).